We begin with the raw amino-acid sequence, 327 residues long: Nocardicin C-9' epimerase (327 aa).

Position 43 is an N6-(pyridoxal phosphate)lysine (Lys-43).

This sequence belongs to the ACC deaminase/D-cysteine desulfhydrase family. It depends on pyridoxal 5'-phosphate as a cofactor.

It catalyses the reaction isonocardicin C = nocardicin C. The enzyme catalyses isonocardicin A = nocardicin A. It functions in the pathway antibiotic biosynthesis. In terms of biological role, involved in the biosynthesis of the beta-lactam antibiotic nocardicin A. Catalyzes the interconversion of the nocardicin homoseryl side chain in both nocardicin A with isonocardicin A, and nocardicin C with isonocardicin C. The sequence is that of Nocardicin C-9' epimerase from Nocardia uniformis subsp. tsuyamanensis.